Here is a 994-residue protein sequence, read N- to C-terminus: MKNFYYFILILLFFNEVCYSLKDGEIKLHLIPHSHCDSGWTSTMNEYYMGQVKSIISSMVQSLNVESNPPRKFVWSEIGFLEQWWDDMPIEIKNDFIKHVKNDRIEFVNGGWVMNDEACASLESVIRQLSNGHKFIREKFGKQPESGWQIDPFGHSSLTPTLQAQFGYKHVVLNRIHYELKKKFKEEKNLQFKWRGSPEGVGPKSDILAHVFDDFYTSPPHMSFDGYNFLAYGLPRLTMEMIELARNRSVFYKSPHVLIPMGGDFAFKNAYKSFEQMDQLVASINGQHANGESNVICQYSTLADFFSDTINWHNENKVSFNYYDSDFFPYADDSNTYWTGYYTSRPLLKGYERHVSSKLRSAEILSALQNDEKYYPNQLLNASKQVSILQHHDAISGTSKKHVVQDYFSRLQKADILVSEQSEKLLASALSQHSPTKLDIIDIGGSLNFPKNNDAISFILFNQLSWSKEELISIKVQSVGDHGESLNSPTNNACPYVLAQEDFLNEIEIDCSPRSDFKSDQSDDHKEFIQIDFPAKLKPFSSKLYYLKRKSNPNKSNWVLPKTNHFNSIENSIYTANLDENYLIKSLKSKSSRHGGGANQITEINQQLLTYSDIGGAYIFRTNKQVFQPPRQVYSTFTYIGKFYQEAQSILQDTHQISNRNGYYYYYGNNQQQQQQQQTISTFNYNSIKLINTGNEMIDKKINFNFHIRGINGTTTINRFTTDIDNNRELYSDNGLEMMHRKSISSQSVEVGRETQSYYPTINSVYIESQSTGKRFVCNNDRSRGVSSQGQGCLEMALHRSLTYEDGKGLEIPAIDESSINARFECYLDEVPSNSQQSNGGGGGDDIRKQSINYQHKFQIYQGQDSSYMSSKSFMLKPLPEFIHILSMERSGPRSIKLRIHNIENNNQSPITFDLNGLFSFIKSIKSIKEYNLSLINRFVDNNIDNIISSHRSIVGKNLFPIKDTPTRFNPINTKQTKITLYPSEIKAIEITYH.

An N-terminal signal peptide occupies residues 1-20 (MKNFYYFILILLFFNEVCYS). Residues histidine 35, aspartate 37, and aspartate 151 each coordinate Zn(2+). Aspartate 151 (nucleophile) is an active-site residue. Asparagine 247 and asparagine 381 each carry an N-linked (GlcNAc...) asparagine glycan. Histidine 392 contributes to the Zn(2+) binding site. 3 N-linked (GlcNAc...) asparagine glycosylation sites follow: asparagine 554, asparagine 712, and asparagine 932.

Belongs to the glycosyl hydrolase 38 family. Requires Zn(2+) as cofactor.

It localises to the secreted. It carries out the reaction Hydrolysis of terminal, non-reducing alpha-D-mannose residues in alpha-D-mannosides.. This chain is Alpha-mannosidase F (manF), found in Dictyostelium discoideum (Social amoeba).